A 477-amino-acid chain; its full sequence is MATYTCITCRVAFRDADMQRAHYKTDWHRYNLRRKVASMAPVTAEGFQERVRAQRAVAEEESKGSATYCTVCSKKFASFNAYENHLKSRRHVELEKKAVQAVNRKVEMMNEKNLEKGLGVDSVDKDAMNAAIQQAIKAQPSMSPKKAPPAPAKEARNVVAVGTGGRGTHDRDPSEKPPRLQWFEQQAKKLAKQQEEDSEEEEEDLDGDDWEDIDSDEELECEDTEAMDDVVEQDAEEEEAEEGPPLGAIPITDCLFCSHHSSSLMKNVAHMTKDHSFFIPDIEYLSDIKGLIKYLGEKVGVGKICLWCNEKGKSFYSTEAVQAHMNDKSHCKLFTDGDAALEFADFYDFRSSYPDHKEGEDPNKAEELPSEKNLEYDDETMELILPSGARVGHRSLMRYYKQRFGLSRAVAVAKNRKAVGRVLQQYRALGWTGSTGAALMRERDMQYVQRMKSKWMLKTGMKNNATKQMHFRVQVRF.

An N-acetylalanine modification is found at alanine 2. U1-type zinc fingers lie at residues 4 to 28 and 67 to 91; these read YTCI…TDWH and TYCT…SRRH. A disordered region spans residues 135-212; it reads AIKAQPSMSP…EDLDGDDWED (78 aa). The segment covering 167 to 178 has biased composition (basic and acidic residues); sequence GTHDRDPSEKPP. The segment covering 196-212 has biased composition (acidic residues); the sequence is EDSEEEEEDLDGDDWED. A Phosphoserine modification is found at serine 276.

Belongs to the REI1 family. Homo- and heterodimer. Associates with pre-60S ribosomal particles. Interacts with MELK and MYBL2. Interacts with DNAJC21. Post-translationally, phosphorylated by MELK. The phosphorylation may redirect the protein to the nucleus. In terms of processing, ubiquitinated by HECTD1, leading to its degradation. In terms of tissue distribution, expressed in lung, kidney, spleen, liver and brain with lowest expression in kidney.

Its subcellular location is the cytoplasm. It is found in the nucleus. Pre-60S-associated cytoplasmic factor involved in the cytoplasmic maturation of the 60S subunit. The sequence is that of Cytoplasmic 60S subunit biogenesis factor ZNF622 from Homo sapiens (Human).